The following is a 211-amino-acid chain: Dual specificity protein phosphatase 26 (211 aa).

A Tyrosine-protein phosphatase domain is found at 60–207; the sequence is NHADEVWPGL…LLALDRRLRQ (148 aa). C152 serves as the catalytic Phosphocysteine intermediate.

The protein belongs to the protein-tyrosine phosphatase family. Non-receptor class dual specificity subfamily. Interacts with HSF4. In terms of tissue distribution, brain. In the brain it is expressed ubiquitously except in the hippocampus. Expressed in embryonal cancers (retinoblastoma, neuroepithilioma and neuroblastoma) and in anaplatic thyroid cancer.

It is found in the cytoplasm. The protein localises to the nucleus. Its subcellular location is the golgi apparatus. The catalysed reaction is O-phospho-L-tyrosyl-[protein] + H2O = L-tyrosyl-[protein] + phosphate. It catalyses the reaction O-phospho-L-seryl-[protein] + H2O = L-seryl-[protein] + phosphate. It carries out the reaction O-phospho-L-threonyl-[protein] + H2O = L-threonyl-[protein] + phosphate. Functionally, inactivates MAPK1 and MAPK3 which leads to dephosphorylation of heat shock factor protein 4 and a reduction in its DNA-binding activity. Inhibits MAP kinase p38 by dephosphorylating it and inhibits p38-mediated apoptosis in anaplastic thyroid cancer cells. Can also induce activation of MAP kinase p38 and c-Jun N-terminal kinase (JNK). This is Dual specificity protein phosphatase 26 (DUSP26) from Homo sapiens (Human).